The following is a 91-amino-acid chain: UPF0250 protein PFLU_5418 (91 aa).

Belongs to the UPF0250 family.

This Pseudomonas fluorescens (strain SBW25) protein is UPF0250 protein PFLU_5418.